Here is a 251-residue protein sequence, read N- to C-terminus: MQNSQAFSDSLPKHIAIIMDGNGRWAKSKGKPRVFGHKKGVNAVRKTVAAASKLGIKAMTLFAFSSENWRRPEEEVGLLMELFITVLSSEVKKLHKNNLQLRVIGDTSRFSERLQKKIVEAENLTASNTGMVINIAANYGGKWDITEAAKALALKARNGEIRVEDINEQLITEHLTMADLPEVDLLIRTSGECRISNFMLWQMAYAEMYFTPEFWPEFDEDSLVEAVTWFINRERRFGCTGEQVKALMTAQ.

Residue D20 is part of the active site. D20 serves as a coordination point for Mg(2+). Residues 21–24 (GNGR), W25, R33, H37, and 65–67 (SSE) each bind substrate. Residue N68 is the Proton acceptor of the active site. Substrate contacts are provided by residues W69, R71, R188, and 194-196 (RIS). E207 is a Mg(2+) binding site.

This sequence belongs to the UPP synthase family. As to quaternary structure, homodimer. Mg(2+) is required as a cofactor.

It carries out the reaction 8 isopentenyl diphosphate + (2E,6E)-farnesyl diphosphate = di-trans,octa-cis-undecaprenyl diphosphate + 8 diphosphate. In terms of biological role, catalyzes the sequential condensation of isopentenyl diphosphate (IPP) with (2E,6E)-farnesyl diphosphate (E,E-FPP) to yield (2Z,6Z,10Z,14Z,18Z,22Z,26Z,30Z,34E,38E)-undecaprenyl diphosphate (di-trans,octa-cis-UPP). UPP is the precursor of glycosyl carrier lipid in the biosynthesis of bacterial cell wall polysaccharide components such as peptidoglycan and lipopolysaccharide. The polypeptide is Ditrans,polycis-undecaprenyl-diphosphate synthase ((2E,6E)-farnesyl-diphosphate specific) (Vibrio parahaemolyticus serotype O3:K6 (strain RIMD 2210633)).